We begin with the raw amino-acid sequence, 242 residues long: Triosephosphate isomerase (242 aa).

8 to 10 provides a ligand contact to substrate; that stretch reads NWK. The Electrophile role is filled by His-98. Glu-167 functions as the Proton acceptor in the catalytic mechanism. Residues Gly-173, Ser-205, and 226–227 contribute to the substrate site; that span reads GG.

Belongs to the triosephosphate isomerase family. In terms of assembly, homodimer.

It localises to the cytoplasm. The catalysed reaction is D-glyceraldehyde 3-phosphate = dihydroxyacetone phosphate. Its pathway is carbohydrate biosynthesis; gluconeogenesis. It participates in carbohydrate degradation; glycolysis; D-glyceraldehyde 3-phosphate from glycerone phosphate: step 1/1. In terms of biological role, involved in the gluconeogenesis. Catalyzes stereospecifically the conversion of dihydroxyacetone phosphate (DHAP) to D-glyceraldehyde-3-phosphate (G3P). The polypeptide is Triosephosphate isomerase (Mesomycoplasma hyopneumoniae (strain 7448) (Mycoplasma hyopneumoniae)).